Reading from the N-terminus, the 406-residue chain is Acetate kinase (406 aa).

Asn7 contributes to the Mg(2+) binding site. An ATP-binding site is contributed by Lys14. Arg90 serves as a coordination point for substrate. The active-site Proton donor/acceptor is Asp147. ATP is bound by residues 207–211, 283–285, and 331–335; these read HLGNG, DMR, and GVGEN. Glu385 contacts Mg(2+).

It belongs to the acetokinase family. Homodimer. Mg(2+) serves as cofactor. The cofactor is Mn(2+).

The protein resides in the cytoplasm. It catalyses the reaction acetate + ATP = acetyl phosphate + ADP. It participates in metabolic intermediate biosynthesis; acetyl-CoA biosynthesis; acetyl-CoA from acetate: step 1/2. Its function is as follows. Catalyzes the formation of acetyl phosphate from acetate and ATP. Can also catalyze the reverse reaction. This Thermosipho melanesiensis (strain DSM 12029 / CIP 104789 / BI429) protein is Acetate kinase.